The primary structure comprises 227 residues: Broad specificity amino-acid racemase RacX (227 aa).

51–53 provides a ligand contact to substrate; that stretch reads DRP. The Proton donor/acceptor role is filled by Cys-82. Residues 83 to 85 and Lys-161 each bind substrate; that span reads NTA. The active-site Proton donor/acceptor is Cys-191.

The protein belongs to the aspartate/glutamate racemases family. In terms of assembly, homodimer.

It catalyses the reaction an L-alpha-amino acid = a D-alpha-amino acid. The catalysed reaction is (2S,6S)-2,6-diaminopimelate = meso-2,6-diaminopimelate. It carries out the reaction L-lysine = D-lysine. The enzyme catalyses L-arginine = D-arginine. It catalyses the reaction L-ornithine = D-ornithine. The catalysed reaction is L-histidine = D-histidine. It carries out the reaction L-alanine = D-alanine. The enzyme catalyses L-tyrosine = D-tyrosine. It catalyses the reaction L-phenylalanine = D-phenylalanine. The catalysed reaction is L-serine = D-serine. It carries out the reaction L-glutamine = D-glutamine. The enzyme catalyses L-methionine = D-methionine. It catalyses the reaction L-asparagine = D-asparagine. The catalysed reaction is L-homoserine = D-homoserine. Amino-acid racemase able to utilize a broad range of substrates. Preferentially catalyzes the epimerization of LL-diaminopimelate, as well as the racemization of D-lysine, L-arginine, L-ornithine, L-lysine and D-arginine. Has lower activity against D-ornithine, L-histidine, L-alanine, L-tyrosine, L-phenylalanine, L-serine, L-glutamine, L-methionine, L-asparagine and L-homoserine. Has weak activity against L-norleucine, L-aminobutyric acid and L-norvaline. Has no activity toward nine L-amino acids (Thr, Glu, Asp, Val, Leu, Ile, Trp, Cit and Aad). D-amino acids might be used as components of peptidoglycan and/or be involved in peptidoglycan metabolism and remodeling. In Bacillus subtilis (strain 168), this protein is Broad specificity amino-acid racemase RacX (racX).